A 966-amino-acid polypeptide reads, in one-letter code: C4 phosphoenolpyruvate carboxylase (966 aa).

Ser-11 is modified (phosphoserine). His-172 is a catalytic residue. Positions 283, 450, and 597 each coordinate D-glucose 6-phosphate. Lys-600 is an active-site residue. Arg-635 contributes to the D-glucose 6-phosphate binding site. Arg-641 is an active-site residue. An L-aspartate-binding site is contributed by Arg-641. Residue Thr-665 participates in D-glucose 6-phosphate binding. Gln-673 provides a ligand contact to L-aspartate. D-glucose 6-phosphate-binding positions include Arg-753 and 767-769 (RAI). L-aspartate-binding residues include Lys-829, Arg-888, and Asn-964.

Belongs to the PEPCase type 1 family. In terms of assembly, homotetramer. It depends on Mg(2+) as a cofactor. As to expression, expressed in mesophyll cells, but not in bundle-sheath, roots, stems and flowers.

It localises to the cytoplasm. The catalysed reaction is oxaloacetate + phosphate = phosphoenolpyruvate + hydrogencarbonate. Its pathway is photosynthesis; C4 acid pathway. With respect to regulation, 5 fold activation by the allosteric regulator glucose-6-phosphate. Low sensitivity to inhibition by L-malate and L-aspartate. Up-regulated by light-reversible phosphorylation. Forms oxaloacetate through the carboxylation of phosphoenolpyruvate (PEP). Catalyzes the first step of C4 photosynthesis. The sequence is that of C4 phosphoenolpyruvate carboxylase from Flaveria trinervia (Clustered yellowtops).